A 485-amino-acid chain; its full sequence is Dynein axonemal assembly factor 3 (485 aa).

This sequence belongs to the DNAAF3 family.

It localises to the cytoplasm. The protein resides in the dynein axonemal particle. Its function is as follows. Required for the assembly of axonemal inner and outer dynein arms. Involved in preassembly of dyneins into complexes before their transport into cilia. This is Dynein axonemal assembly factor 3 (dnaaf3) from Xenopus laevis (African clawed frog).